Here is a 20-residue protein sequence, read N- to C-terminus: Venom prothrombin activator notanarin-D (20 aa).

The Gla domain maps to 1–10; sequence SNSLFEEVRP. 4-carboxyglutamate is present on residues Glu6 and Glu7. Residues 11–20 form the Peptidase S1 domain; that stretch reads IVNGMDCKLG.

The protein belongs to the peptidase S1 family. Snake venom subfamily. Heterodimer of a light chain and a heavy chain; disulfide-linked. Post-translationally, gamma-carboxyglutamate residues are formed by vitamin K dependent carboxylation. These residues are essential for the binding of calcium. As to expression, expressed by the venom gland.

The protein localises to the secreted. The enzyme catalyses Selective cleavage of Arg-|-Thr and then Arg-|-Ile bonds in prothrombin to form thrombin.. Snake prothrombin activator that attacks the hemostatic system of prey. This protein is functionally similar to blood coagulation factor Xa. The protein is Venom prothrombin activator notanarin-D of Notechis scutatus niger (Peninsula tiger snake).